A 1131-amino-acid polypeptide reads, in one-letter code: Major DNA-binding protein (1131 aa).

The Required for filament formation signature appears at 790-791 (FW). Residues 1112–1131 (LKCEETEHENEEPSLKKARL) form a required for nuclear localization region.

It belongs to the herpesviridae major DNA-binding protein family. Homooligomers. Forms double-helical filaments necessary for the formation of replication compartments within the host nucleus. Interacts with the origin-binding protein. Interacts with the helicase primase complex; this interaction stimulates primer synthesis activity of the helicase-primase complex. Interacts with the DNA polymerase. Interacts with the alkaline exonuclease; this interaction increases its nuclease processivity.

It is found in the host nucleus. Its function is as follows. Single-stranded DNA-binding protein required for DNA replication. Plays several crucial roles in viral infection. Participates in the opening of the viral DNA origin to initiate replication by interacting with the origin-binding protein. May disrupt loops, hairpins and other secondary structures present on ssDNA to reduce and eliminate pausing of viral DNA polymerase at specific sites during elongation. Promotes viral DNA recombination by performing strand-transfer, characterized by the ability to transfer a DNA strand from a linear duplex to a complementary single-stranded DNA circle. Can also catalyze the renaturation of complementary single strands. Additionally, reorganizes the host cell nucleus, leading to the formation of prereplicative sites and replication compartments. This process is driven by the protein which can form double-helical filaments in the absence of DNA. This Human herpesvirus 7 (strain JI) (HHV-7) protein is Major DNA-binding protein.